The sequence spans 258 residues: Tryptophan synthase alpha chain (258 aa).

Catalysis depends on proton acceptor residues Glu-44 and Asp-55.

It belongs to the TrpA family. Tetramer of two alpha and two beta chains.

The catalysed reaction is (1S,2R)-1-C-(indol-3-yl)glycerol 3-phosphate + L-serine = D-glyceraldehyde 3-phosphate + L-tryptophan + H2O. The protein operates within amino-acid biosynthesis; L-tryptophan biosynthesis; L-tryptophan from chorismate: step 5/5. The alpha subunit is responsible for the aldol cleavage of indoleglycerol phosphate to indole and glyceraldehyde 3-phosphate. The protein is Tryptophan synthase alpha chain of Petrotoga mobilis (strain DSM 10674 / SJ95).